The chain runs to 621 residues: tRNA uridine 5-carboxymethylaminomethyl modification enzyme MnmG (621 aa).

Position 8-13 (8-13 (GAGHAG)) interacts with FAD. A disordered region spans residues 199–227 (PRIDRRSVDYSRVEEQKGDENPPPFSFST). Over residues 200-218 (RIDRRSVDYSRVEEQKGDE) the composition is skewed to basic and acidic residues. 269 to 283 (GPRYCPSIEDKIFRF) is a binding site for NAD(+).

The protein belongs to the MnmG family. Homodimer. Heterotetramer of two MnmE and two MnmG subunits. Requires FAD as cofactor.

The protein resides in the cytoplasm. NAD-binding protein involved in the addition of a carboxymethylaminomethyl (cmnm) group at the wobble position (U34) of certain tRNAs, forming tRNA-cmnm(5)s(2)U34. The sequence is that of tRNA uridine 5-carboxymethylaminomethyl modification enzyme MnmG from Chlorobium luteolum (strain DSM 273 / BCRC 81028 / 2530) (Pelodictyon luteolum).